A 475-amino-acid chain; its full sequence is GTPase Der (475 aa).

EngA-type G domains follow at residues 2-166 (LRIA…NIPE) and 213-386 (LKIA…ETVS). GTP-binding positions include 8 to 15 (GRPNVGKS), 55 to 59 (DTGGV), 118 to 121 (NKAD), 219 to 226 (GRPNVGKS), 266 to 270 (DTAGL), and 331 to 334 (NKWD). In terms of domain architecture, KH-like spans 387-471 (RKVPTPVVNK…PFDLEIKEKA (85 aa)).

It belongs to the TRAFAC class TrmE-Era-EngA-EngB-Septin-like GTPase superfamily. EngA (Der) GTPase family. As to quaternary structure, associates with the 50S ribosomal subunit.

Functionally, GTPase that plays an essential role in the late steps of ribosome biogenesis. This chain is GTPase Der, found in Chlamydia felis (strain Fe/C-56) (Chlamydophila felis).